The chain runs to 439 residues: Glutamine synthetase (439 aa).

The 86-residue stretch at 13–98 (ENVRFIRLQF…VICDVYTPDG (86 aa)) folds into the GS beta-grasp domain. The 335-residue stretch at 105 to 439 (PRYRLRRMME…NWELQRYLYL (335 aa)) folds into the GS catalytic domain. Mg(2+)-binding residues include Glu128 and Glu130. Glu180 is an ATP binding site. Mg(2+) contacts are provided by Glu185 and Glu192. L-glutamate-binding positions include 236-237 (NG) and Gly237. His241 provides a ligand contact to Mg(2+). Residues 243-245 (HMS) and Ser245 contribute to the ATP site. Arg294, Glu300, and Arg312 together coordinate L-glutamate. The ATP site is built by Arg312, Arg317, and Lys324. Glu329 contributes to the Mg(2+) binding site. Arg331 lines the L-glutamate pocket.

Belongs to the glutamine synthetase family. In terms of assembly, oligomer of 12 subunits arranged in the form of two hexagons. In its feedback-inhibited form, interacts with TnrA in order to block its DNA-binding activity. It depends on Mg(2+) as a cofactor.

It localises to the cytoplasm. The catalysed reaction is L-glutamate + NH4(+) + ATP = L-glutamine + ADP + phosphate + H(+). Inhibited by glutamine. In terms of biological role, glutamine synthetase (GS) is an unusual multitasking protein that functions as an enzyme, a transcription coregulator, and a chaperone in ammonium assimilation and in the regulation of genes involved in nitrogen metabolism. It catalyzes the ATP-dependent biosynthesis of glutamine from glutamate and ammonia. Feedback-inhibited GlnA also interacts with and regulates the activity of the transcriptional regulator TnrA. During nitrogen limitation, TnrA is in its DNA-binding active state and turns on the transcription of genes required for nitrogen assimilation. Under conditions of nitrogen excess, feedback-inhibited GlnA forms a stable complex with TnrA, which inhibits its DNA-binding activity. In contrast, feedback-inhibited GlnA acts as a chaperone to stabilize the DNA-binding activity of GlnR, which represses the transcription of nitrogen assimilation genes. This chain is Glutamine synthetase, found in Thermotoga maritima (strain ATCC 43589 / DSM 3109 / JCM 10099 / NBRC 100826 / MSB8).